The following is a 270-amino-acid chain: Diaminopimelate epimerase (270 aa).

Substrate contacts are provided by asparagine 15, glutamine 49, and asparagine 66. Cysteine 75 functions as the Proton donor in the catalytic mechanism. Substrate contacts are provided by residues 76 to 77 (GN), asparagine 155, asparagine 187, and 204 to 205 (ER). The active-site Proton acceptor is cysteine 213. 214-215 (GS) contacts substrate.

It belongs to the diaminopimelate epimerase family. In terms of assembly, homodimer.

Its subcellular location is the cytoplasm. It catalyses the reaction (2S,6S)-2,6-diaminopimelate = meso-2,6-diaminopimelate. Its pathway is amino-acid biosynthesis; L-lysine biosynthesis via DAP pathway; DL-2,6-diaminopimelate from LL-2,6-diaminopimelate: step 1/1. Its function is as follows. Catalyzes the stereoinversion of LL-2,6-diaminopimelate (L,L-DAP) to meso-diaminopimelate (meso-DAP), a precursor of L-lysine and an essential component of the bacterial peptidoglycan. In Rickettsia felis (strain ATCC VR-1525 / URRWXCal2) (Rickettsia azadi), this protein is Diaminopimelate epimerase.